Consider the following 384-residue polypeptide: BTB and MATH domain-containing protein 34 (384 aa).

Positions 41–127 (LNGNTTLKRI…ELKFQKEQLK (87 aa)) form a coiled coil. An MATH domain is found at 167 to 277 (EFSHTFNSVA…VFNFGEYEEI (111 aa)). Positions 317–380 (SDAVMIVKDE…LYGEPALTGR (64 aa)) constitute a BTB domain.

In Caenorhabditis elegans, this protein is BTB and MATH domain-containing protein 34 (bath-34).